Reading from the N-terminus, the 184-residue chain is Peptidyl-tRNA hydrolase (184 aa).

Tyrosine 14 serves as a coordination point for tRNA. The Proton acceptor role is filled by histidine 19. TRNA is bound by residues phenylalanine 64, asparagine 66, and asparagine 112.

The protein belongs to the PTH family. As to quaternary structure, monomer.

The protein resides in the cytoplasm. The catalysed reaction is an N-acyl-L-alpha-aminoacyl-tRNA + H2O = an N-acyl-L-amino acid + a tRNA + H(+). Functionally, hydrolyzes ribosome-free peptidyl-tRNAs (with 1 or more amino acids incorporated), which drop off the ribosome during protein synthesis, or as a result of ribosome stalling. Catalyzes the release of premature peptidyl moieties from peptidyl-tRNA molecules trapped in stalled 50S ribosomal subunits, and thus maintains levels of free tRNAs and 50S ribosomes. The chain is Peptidyl-tRNA hydrolase from Listeria welshimeri serovar 6b (strain ATCC 35897 / DSM 20650 / CCUG 15529 / CIP 8149 / NCTC 11857 / SLCC 5334 / V8).